We begin with the raw amino-acid sequence, 281 residues long: Pantothenate synthetase (281 aa).

26–33 (MGYLHQGH) is an ATP binding site. Catalysis depends on H33, which acts as the Proton donor. Residue Q57 coordinates (R)-pantoate. Q57 serves as a coordination point for beta-alanine. ATP is bound at residue 143-146 (GQKD). Residue Q149 coordinates (R)-pantoate. ATP-binding positions include V172 and 180 to 183 (LSSR).

This sequence belongs to the pantothenate synthetase family. As to quaternary structure, homodimer.

It localises to the cytoplasm. The enzyme catalyses (R)-pantoate + beta-alanine + ATP = (R)-pantothenate + AMP + diphosphate + H(+). It functions in the pathway cofactor biosynthesis; (R)-pantothenate biosynthesis; (R)-pantothenate from (R)-pantoate and beta-alanine: step 1/1. Catalyzes the condensation of pantoate with beta-alanine in an ATP-dependent reaction via a pantoyl-adenylate intermediate. This is Pantothenate synthetase from Chloroflexus aurantiacus (strain ATCC 29366 / DSM 635 / J-10-fl).